A 77-amino-acid chain; its full sequence is TSC22 domain family protein 3 (77 aa).

At Met-1 the chain carries N-acetylmethionine. A leucine-zipper region spans residues 19 to 40 (LKEQIRELVEKNSQLERENTLL). The tract at residues 41 to 77 (KTLASPEQLEKFQSRLSPEEPAPETPEAPEAPGGSAV) is disordered. Ser-45 is subject to Phosphoserine. Residues 68–77 (APEAPGGSAV) are compositionally biased toward low complexity.

The protein belongs to the TSC-22/Dip/Bun family. In terms of assembly, can form homodimers, however it is likely to function as a monomer. Interacts with AP1 and NFKB1. Interacts with MYOD1. Interacts with HDAC1; this interaction affects HDAC1 activity on MYOG promoter and thus inhibits MYOD1 transcriptional activity.

It is found in the cytoplasm. Its subcellular location is the nucleus. Protects T-cells from IL2 deprivation-induced apoptosis through the inhibition of FOXO3A transcriptional activity that leads to the down-regulation of the pro-apoptotic factor BCL2L11. In macrophages, plays a role in the anti-inflammatory and immunosuppressive effects of glucocorticoids and IL10. In T-cells, inhibits anti-CD3-induced NFKB1 nuclear translocation. In vitro, suppresses AP1 and NFKB1 DNA-binding activities. Inhibits myogenic differentiation and mediates anti-myogenic effects of glucocorticoids by binding and regulating MYOD1 and HDAC1 transcriptional activity resulting in reduced expression of MYOG. This Sus scrofa (Pig) protein is TSC22 domain family protein 3 (TSC22D3).